A 327-amino-acid polypeptide reads, in one-letter code: Glycerol-3-phosphate dehydrogenase [NAD(P)+] (327 aa).

Residues tryptophan 11, arginine 30, and lysine 103 each coordinate NADPH. Positions 103, 131, and 133 each coordinate sn-glycerol 3-phosphate. Residue alanine 135 coordinates NADPH. Sn-glycerol 3-phosphate contacts are provided by lysine 186, aspartate 243, serine 253, arginine 254, and asparagine 255. Lysine 186 acts as the Proton acceptor in catalysis. Arginine 254 contributes to the NADPH binding site. Residues valine 281 and glutamate 283 each coordinate NADPH.

Belongs to the NAD-dependent glycerol-3-phosphate dehydrogenase family.

The protein resides in the cytoplasm. The enzyme catalyses sn-glycerol 3-phosphate + NAD(+) = dihydroxyacetone phosphate + NADH + H(+). The catalysed reaction is sn-glycerol 3-phosphate + NADP(+) = dihydroxyacetone phosphate + NADPH + H(+). It functions in the pathway membrane lipid metabolism; glycerophospholipid metabolism. Catalyzes the reduction of the glycolytic intermediate dihydroxyacetone phosphate (DHAP) to sn-glycerol 3-phosphate (G3P), the key precursor for phospholipid synthesis. In Wolbachia sp. subsp. Drosophila simulans (strain wRi), this protein is Glycerol-3-phosphate dehydrogenase [NAD(P)+].